We begin with the raw amino-acid sequence, 151 residues long: RNA polymerase-binding transcription factor DksA (151 aa).

Residues Cys114, Cys117, Cys135, and Cys138 each coordinate Zn(2+). Residues 114–138 (CNSCAVEIGIRRLEARPTANLCIDC) form a dksA C4-type zinc finger.

The protein belongs to the DksA family. As to quaternary structure, interacts directly with the RNA polymerase.

It is found in the cytoplasm. Transcription factor that acts by binding directly to the RNA polymerase (RNAP). Required for negative regulation of rRNA expression and positive regulation of several amino acid biosynthesis promoters. Also required for regulation of fis expression. This is RNA polymerase-binding transcription factor DksA from Buchnera aphidicola subsp. Schizaphis graminum (strain Sg).